We begin with the raw amino-acid sequence, 285 residues long: Methylamine utilization protein MauF (285 aa).

The next 7 membrane-spanning stretches (helical) occupy residues 39–59, 60–80, 119–139, 145–165, 188–208, 212–232, and 265–285; these read FIMM…MHST, MSVE…GGLL, YAIG…LLFA, YAVI…FGFL, VIGL…VQTP, IVTG…VIAV, and VEVD…LVML.

The protein localises to the cell membrane. The protein operates within one-carbon metabolism; methylamine degradation. This is Methylamine utilization protein MauF (mauF) from Methylophilus methylotrophus (Bacterium W3A1).